We begin with the raw amino-acid sequence, 518 residues long: Bifunctional purine biosynthesis protein PurH (518 aa).

In terms of domain architecture, MGS-like spans 1-144; that stretch reads MSKRALISVS…KNHASVTVVC (144 aa).

It belongs to the PurH family.

The enzyme catalyses (6R)-10-formyltetrahydrofolate + 5-amino-1-(5-phospho-beta-D-ribosyl)imidazole-4-carboxamide = 5-formamido-1-(5-phospho-D-ribosyl)imidazole-4-carboxamide + (6S)-5,6,7,8-tetrahydrofolate. It catalyses the reaction IMP + H2O = 5-formamido-1-(5-phospho-D-ribosyl)imidazole-4-carboxamide. The protein operates within purine metabolism; IMP biosynthesis via de novo pathway; 5-formamido-1-(5-phospho-D-ribosyl)imidazole-4-carboxamide from 5-amino-1-(5-phospho-D-ribosyl)imidazole-4-carboxamide (10-formyl THF route): step 1/1. It functions in the pathway purine metabolism; IMP biosynthesis via de novo pathway; IMP from 5-formamido-1-(5-phospho-D-ribosyl)imidazole-4-carboxamide: step 1/1. The polypeptide is Bifunctional purine biosynthesis protein PurH (Lactococcus lactis subsp. lactis (strain IL1403) (Streptococcus lactis)).